The sequence spans 242 residues: ATP synthase subunit a (242 aa).

Helical transmembrane passes span serine 29 to tyrosine 49, phenylalanine 84 to threonine 104, isoleucine 114 to valine 134, phenylalanine 140 to isoleucine 160, valine 189 to methionine 209, and methionine 210 to leucine 230.

This sequence belongs to the ATPase A chain family. In terms of assembly, F-type ATPases have 2 components, CF(1) - the catalytic core - and CF(0) - the membrane proton channel. CF(1) has five subunits: alpha(3), beta(3), gamma(1), delta(1), epsilon(1). CF(0) has three main subunits: a(1), b(2) and c(9-12). The alpha and beta chains form an alternating ring which encloses part of the gamma chain. CF(1) is attached to CF(0) by a central stalk formed by the gamma and epsilon chains, while a peripheral stalk is formed by the delta and b chains.

It localises to the cell inner membrane. Key component of the proton channel; it plays a direct role in the translocation of protons across the membrane. The chain is ATP synthase subunit a from Rickettsia massiliae (strain Mtu5).